Reading from the N-terminus, the 945-residue chain is Isoleucine--tRNA ligase 1 (945 aa).

The 'HIGH' region motif lies at 66 to 76 (PYANGDIHLGH). Position 581 (Glu581) interacts with L-isoleucyl-5'-AMP. The short motif at 622 to 626 (KMSKS) is the 'KMSKS' region element. An ATP-binding site is contributed by Lys625. 4 residues coordinate Zn(2+): Cys908, Cys911, Cys928, and Cys931.

Belongs to the class-I aminoacyl-tRNA synthetase family. IleS type 1 subfamily. Monomer. The cofactor is Zn(2+).

The protein localises to the cytoplasm. The catalysed reaction is tRNA(Ile) + L-isoleucine + ATP = L-isoleucyl-tRNA(Ile) + AMP + diphosphate. Its function is as follows. Catalyzes the attachment of isoleucine to tRNA(Ile). As IleRS can inadvertently accommodate and process structurally similar amino acids such as valine, to avoid such errors it has two additional distinct tRNA(Ile)-dependent editing activities. One activity is designated as 'pretransfer' editing and involves the hydrolysis of activated Val-AMP. The other activity is designated 'posttransfer' editing and involves deacylation of mischarged Val-tRNA(Ile). The sequence is that of Isoleucine--tRNA ligase 1 from Burkholderia mallei (strain ATCC 23344).